The primary structure comprises 469 residues: Dihydrolipoyl dehydrogenase (469 aa).

Residues 40 to 48 (EKAVLGGVC), Lys-57, and Ala-120 contribute to the FAD site. A disulfide bond links Cys-48 and Cys-53. Residues 186–190 (GGGAI), Glu-209, and 275–278 (AVGV) contribute to the NAD(+) site. FAD is bound by residues Asp-317 and Ala-325. His-450 serves as the catalytic Proton acceptor.

Belongs to the class-I pyridine nucleotide-disulfide oxidoreductase family. In terms of assembly, homodimer. FAD serves as cofactor.

It localises to the cytoplasm. It catalyses the reaction N(6)-[(R)-dihydrolipoyl]-L-lysyl-[protein] + NAD(+) = N(6)-[(R)-lipoyl]-L-lysyl-[protein] + NADH + H(+). Lipoamide dehydrogenase is a component of the alpha-ketoacid dehydrogenase complexes. The polypeptide is Dihydrolipoyl dehydrogenase (lpd) (Chlorobaculum tepidum (strain ATCC 49652 / DSM 12025 / NBRC 103806 / TLS) (Chlorobium tepidum)).